We begin with the raw amino-acid sequence, 445 residues long: Phosphatidate cytidylyltransferase 2 (445 aa).

The segment covering 1-39 (MTELRQRVAHEPVAPPEDKESESEAKVDGETASDSESRA) has biased composition (basic and acidic residues). Positions 1 to 49 (MTELRQRVAHEPVAPPEDKESESEAKVDGETASDSESRAESAPLPVSAD) are disordered. S21 carries the phosphoserine modification. T31 is modified (phosphothreonine). Residues S33, S35, and S37 each carry the phosphoserine modification. T51 is subject to Phosphothreonine. The next 6 membrane-spanning stretches (helical) occupy residues 79-99 (MIAF…IIVM), 132-152 (FLLC…FFTL), 166-186 (HRFI…LSLV), 213-233 (LVIH…SCVI), 262-282 (GFIG…YVMS), and 340-360 (IALS…ASGF).

This sequence belongs to the CDS family. Homodimer. Widely expressed. Expressed in heart, brain and retina, and to a lesser extent in placenta, lung, liver, skeletal muscle, kidney and pancreas.

The protein localises to the endoplasmic reticulum membrane. The enzyme catalyses a 1,2-diacyl-sn-glycero-3-phosphate + CTP + H(+) = a CDP-1,2-diacyl-sn-glycerol + diphosphate. It carries out the reaction 1-octadecanoyl-2-(5Z,8Z,11Z,14Z-eicosatetraenoyl)-sn-glycero-3-phosphate + CTP + H(+) = 1-octadecanoyl-2-(5Z,8Z,11Z,14Z-eicosatetraenoyl)-sn-glycero-3-cytidine-5'-diphosphate + diphosphate. The catalysed reaction is 1-octadecanoyl-2-(9Z,12Z-octadecadienoyl)-sn-glycero-3-phosphate + CTP + H(+) = 1-octadecanoyl-2-(9Z,12Z-octadecadienoyl)-sn-glycero-3-cytidine-5'-diphosphate + diphosphate. It catalyses the reaction 1-hexadecanoyl-2-(5Z,8Z,11Z,14Z-eicosatetraenoyl)-sn-glycero-3-phosphate + CTP + H(+) = 1-hexadecanoyl-2-(5Z,8Z,11Z,14Z-eicosatetraenoyl)-sn-glycero-3-cytidine-5'-diphosphate + diphosphate. The enzyme catalyses 1,2-di-(5Z,8Z,11Z,14Z)-eicosatetraenoyl-sn-glycero-3-phosphate + CTP + H(+) = 1,2-di-(5Z,8Z,11Z,14Z-eicosatetraenoyl)-sn-glycero-3-cytidine-5'-diphosphate + diphosphate. It carries out the reaction 1-octadecanoyl-2-(9Z-octadecenoyl)-sn-glycero-3-phosphate + CTP + H(+) = 1-octadecanoyl-2-(9Z-octadecenoyl)-sn-glycero-3-cytidine-5'-diphosphate + diphosphate. The catalysed reaction is 1-octadecanoyl-2-(4Z,7Z,10Z,13Z,16Z,19Z-docosahexaenoyl)-sn-glycero-3-phosphate + CTP + H(+) = 1-octadecanoyl-2-(4Z,7Z,10Z,13Z,16Z,19Z-docosahexaenoyl)-sn-glycero-3-cytidine-5'-diphosphate + diphosphate. It catalyses the reaction 1,2-di-(9Z,12Z-octadecadienoyl)-sn-glycero-3-phosphate + CTP + H(+) = 1,2-di-(9Z,12Z-octadecadienoyl)-sn-glycero-3-cytidine-5'-diphosphate + diphosphate. The enzyme catalyses 1,2-di-(9Z-octadecenoyl)-sn-glycero-3-phosphate + CTP + H(+) = 1,2-di-(9Z-octadecenoyl)-sn-glycero-3-cytidine-5'-diphosphate + diphosphate. It participates in phospholipid metabolism; CDP-diacylglycerol biosynthesis; CDP-diacylglycerol from sn-glycerol 3-phosphate: step 3/3. Inhibited by its anionic phospholipid end products, with phosphatidylinositol-(4,5)- bisphosphate (PIP2) showing the strongest inhibition. Inhibition is also acyl chain specific, with 1-stearoyl-2-arachidonoyl-snphosphatidylinositol showing the strongest inhibition. Catalyzes the conversion of phosphatidic acid (PA) to CDP-diacylglycerol (CDP-DAG), an essential intermediate in the synthesis of phosphatidylglycerol, cardiolipin and phosphatidylinositol. Exhibits specificity for the nature of the acyl chains at the sn-1 and sn-2 positions in the substrate, PA and the preferred acyl chain composition is 1-stearoyl-2-arachidonoyl-sn-phosphatidic acid. Plays an important role in regulating the growth and maturation of lipid droplets which are storage organelles at the center of lipid and energy homeostasis. This chain is Phosphatidate cytidylyltransferase 2, found in Homo sapiens (Human).